The sequence spans 443 residues: Multidrug resistance protein MdtA (443 aa).

The first 24 residues, 1-24, serve as a signal peptide directing secretion; that stretch reads MKAQSKRTSRLLILLGIAVAIIVA. Over residues 36 to 46 the composition is skewed to polar residues; that stretch reads DGSTGAQQHAV. Disordered stretches follow at residues 36–57 and 398–443; these read DGST…GGRR and TPRS…AEKS. The segment covering 409-419 has biased composition (basic and acidic residues); the sequence is AAEKPATAEKA. Residues 427-443 show a composition bias toward low complexity; sequence SATGASAGSTTTAAEKS.

The protein belongs to the membrane fusion protein (MFP) (TC 8.A.1) family. In terms of assembly, part of a tripartite efflux system composed of MdtA, MdtB and MdtC.

The protein resides in the cell inner membrane. The polypeptide is Multidrug resistance protein MdtA (Yersinia enterocolitica serotype O:8 / biotype 1B (strain NCTC 13174 / 8081)).